A 163-amino-acid chain; its full sequence is SsrA-binding protein (163 aa).

It belongs to the SmpB family.

The protein localises to the cytoplasm. Its function is as follows. Required for rescue of stalled ribosomes mediated by trans-translation. Binds to transfer-messenger RNA (tmRNA), required for stable association of tmRNA with ribosomes. tmRNA and SmpB together mimic tRNA shape, replacing the anticodon stem-loop with SmpB. tmRNA is encoded by the ssrA gene; the 2 termini fold to resemble tRNA(Ala) and it encodes a 'tag peptide', a short internal open reading frame. During trans-translation Ala-aminoacylated tmRNA acts like a tRNA, entering the A-site of stalled ribosomes, displacing the stalled mRNA. The ribosome then switches to translate the ORF on the tmRNA; the nascent peptide is terminated with the 'tag peptide' encoded by the tmRNA and targeted for degradation. The ribosome is freed to recommence translation, which seems to be the essential function of trans-translation. This is SsrA-binding protein from Shewanella putrefaciens (strain CN-32 / ATCC BAA-453).